The following is a 280-amino-acid chain: tRNA dimethylallyltransferase (280 aa).

An ATP-binding site is contributed by 9–16; sequence GPTGSGKT. Position 11 to 16 (11 to 16) interacts with substrate; the sequence is TGSGKT. The tract at residues 34-37 is interaction with substrate tRNA; sequence DSVS.

This sequence belongs to the IPP transferase family. Monomer. It depends on Mg(2+) as a cofactor.

The catalysed reaction is adenosine(37) in tRNA + dimethylallyl diphosphate = N(6)-dimethylallyladenosine(37) in tRNA + diphosphate. In terms of biological role, catalyzes the transfer of a dimethylallyl group onto the adenine at position 37 in tRNAs that read codons beginning with uridine, leading to the formation of N6-(dimethylallyl)adenosine (i(6)A). The chain is tRNA dimethylallyltransferase from Acholeplasma laidlawii (strain PG-8A).